The primary structure comprises 189 residues: Protein GrpE (189 aa).

Polar residues predominate over residues 1–13 (MSENKQPEQNQDL). The interval 1-35 (MSENKQPEQNQDLTGEPSPEELEAAQAADEFDAMN) is disordered.

Belongs to the GrpE family. Homodimer.

Its subcellular location is the cytoplasm. Participates actively in the response to hyperosmotic and heat shock by preventing the aggregation of stress-denatured proteins, in association with DnaK and GrpE. It is the nucleotide exchange factor for DnaK and may function as a thermosensor. Unfolded proteins bind initially to DnaJ; upon interaction with the DnaJ-bound protein, DnaK hydrolyzes its bound ATP, resulting in the formation of a stable complex. GrpE releases ADP from DnaK; ATP binding to DnaK triggers the release of the substrate protein, thus completing the reaction cycle. Several rounds of ATP-dependent interactions between DnaJ, DnaK and GrpE are required for fully efficient folding. In Polaromonas naphthalenivorans (strain CJ2), this protein is Protein GrpE.